A 346-amino-acid chain; its full sequence is Large ribosomal subunit protein uL10 (346 aa).

The segment at 305–346 is disordered; that stretch reads EVPAAPAPEAKEEKKEEAEEEEEEKKEVSEEDLSAGLGALFG. Positions 322–337 are enriched in acidic residues; that stretch reads AEEEEEEKKEVSEEDL.

This sequence belongs to the universal ribosomal protein uL10 family. Part of the 50S ribosomal subunit. Forms part of the ribosomal stalk which helps the ribosome interact with GTP-bound translation factors. Forms a heptameric L10(L12)2(L12)2(L12)2 complex, where L10 forms an elongated spine to which the L12 dimers bind in a sequential fashion.

In terms of biological role, forms part of the ribosomal stalk, playing a central role in the interaction of the ribosome with GTP-bound translation factors. The protein is Large ribosomal subunit protein uL10 of Ignicoccus hospitalis (strain KIN4/I / DSM 18386 / JCM 14125).